Reading from the N-terminus, the 1282-residue chain is Clustered mitochondria protein homolog (1282 aa).

Positions 1 to 43 (MEQNNGTTEHPKEVLDQTNPSNEVTGVPNGNHAEGEGDQNAGE) are disordered. The Clu domain maps to 341 to 585 (DITRPQENYL…RITPLDVLWY (245 aa)). 2 stretches are compositionally biased toward basic and acidic residues: residues 631–641 (EAEEKAEESKP) and 653–669 (ESEK…RVDI). Disordered stretches follow at residues 631–669 (EAEE…RVDI) and 892–936 (RSQL…PAPA). Residues 924-936 (QASPRPAQSPAPA) show a composition bias toward low complexity. One copy of the TPR repeat lies at 1003–1036 (AKLYHQLSMLYYQSDDKDAAVELARKAVIVTERT). The segment at 1202 to 1282 (ANLPTRLGTK…SKQSTVKPSS (81 aa)) is disordered. Residues 1212 to 1223 (PQPQVGQTTSEM) are compositionally biased toward polar residues. A compositionally biased stretch (basic residues) spans 1257–1272 (TKQKKRAAARNPKLRG). A compositionally biased stretch (polar residues) spans 1273–1282 (SKQSTVKPSS).

This sequence belongs to the CLU family. As to quaternary structure, may associate with the eukaryotic translation initiation factor 3 (eIF-3) complex.

It is found in the cytoplasm. Its function is as follows. mRNA-binding protein involved in proper cytoplasmic distribution of mitochondria. This chain is Clustered mitochondria protein homolog, found in Coccidioides immitis (strain RS) (Valley fever fungus).